We begin with the raw amino-acid sequence, 506 residues long: 5'-3' exonuclease PLD4 (506 aa).

A helical membrane pass occupies residues 31–51 (LQVLGALAVLWLGSVALICLL). A disulfide bridge links Cys-94 with Cys-250. 2 N-linked (GlcNAc...) asparagine glycosylation sites follow: Asn-150 and Asn-171. Residues 209 to 236 (TRGVLHSKFWVVDGRHIYMGSANMDWRS) enclose the PLD phosphodiesterase 1 domain. The Proton donor role is filled by His-214. Residues Lys-216 and Asp-221 contribute to the active site. N-linked (GlcNAc...) asparagine glycosylation is found at Asn-249, Asn-281, Asn-403, Asn-417, and Asn-427. Cys-379 and Cys-502 are oxidised to a cystine. Residues 423 to 449 (FSRVNHSKFMVTEKAAYIGTSNWSEDY) enclose the PLD phosphodiesterase 2 domain. His-428 (nucleophile) is an active-site residue. Asn-444 is a glycosylation site (N-linked (GlcNAc...) asparagine).

It belongs to the phospholipase D family. In terms of assembly, homodimer. Post-translationally, highly N-glycosylated. In terms of tissue distribution, expressed in plasmacytoid dendritic cells and monocytes (at protein level).

It localises to the endoplasmic reticulum membrane. The protein localises to the golgi apparatus. The protein resides in the trans-Golgi network membrane. Its subcellular location is the nucleus. It is found in the early endosome. It localises to the cytoplasmic vesicle. The protein localises to the phagosome. The protein resides in the lysosome. The catalysed reaction is Exonucleolytic cleavage in the 5'- to 3'-direction to yield nucleoside 3'-phosphates.. The enzyme catalyses a 5'-end 5'-dephospho-ribonucleotidyl-ribonucleotide-RNA + H2O = a ribonucleoside 3'-phosphate + a 5'-end dephospho-ribonucleoside-RNA + H(+). It catalyses the reaction a ribonucleoside 3'-phosphate-2'-3'-cyclophospho-GMP + H2O = a ribonucleoside 3'-phosphate + 2',3'-cyclophospho-GMP + H(+). It carries out the reaction a 5'-end 5'-dephospho-2'-deoxyribonucleotidyl-2'-deoxyribonucleotide in single-stranded DNA + H2O = a 5'-end dephospho-2'-deoxyribonucleoside in single-stranded DNA + a 2'-deoxyribonucleoside 3'-phosphate + H(+). The catalysed reaction is a 5'-end 5'-phospho-2'-deoxyribonucleotide in single-stranded DNA + H2O = a 5'-end 5'-dephospho-2'-deoxyribonucleotide in single-stranded DNA + phosphate. The enzyme catalyses a 3-lyso-sn-glycero-1-phospho-(3'-acyl-1'-sn-glycerol) + a 1-acyl-sn-glycerol = a 3-acyl-sn-glycero-1-phospho-(3'-acyl-1'-sn-glycerol) + glycerol. It catalyses the reaction 3-lyso-sn-glycero-1-phospho-(3'-(9Z-octadecenoyl)-1'-sn-glycerol) + 1-(9Z-octadecenoyl)-sn-glycerol = 3-(9Z-octadecenoyl)-sn-glycero-1-phospho-(3'-(9Z-octadecenoyl)-1'-sn-glycerol) + glycerol. With respect to regulation, the exonuclease activity toward ssDNA substrate is Ca(2+) and Mg(2+)-independent, but it is inhibited by Fe(2+), Cu(2+) and to a lesser extent Zn(2+) ions. 5'-&gt;3' exonuclease that hydrolyzes the phosphodiester bond of single-stranded DNA (ssDNA) and RNA molecules to form nucleoside 3'-monophosphates and 5'-end 5'-hydroxy deoxyribonucleotide/ribonucleotide fragments. Partially redundant with PLD3, can cleave all four nucleotides displaying higher efficiency for ssDNA and RNA fragments initiated with uridine and guanosine residues and lower efficiency for cytidine-initiated substrates. As a result, it does not always degrade polynucleotides to the single nucleotide level, it can stall at specific sites sparing certain fragments from exonucleolytic degradation. Processes self and pathogenic ssDNA and RNA molecules that reach the endolysosomal compartment via phagocytosis or autophagy and may serve as 'danger' signals for recognition by innate immune receptors such as toll-like receptors (TLRs). Degrades mitochondrial CpG-rich ssDNA fragments to prevent TLR9 activation and autoinflammatory response, but it can cleave viral RNA to generate ligands for TLR7 activation and initiate antiviral immune responses. In plasmacytoid dendritic cells, it cooperates with endonuclease RNASET2 to release 2',3'-cyclic guanosine monophosphate (2',3'-cGMP), a potent stimulatory ligand for TLR7. Produces 2',3'-cGMPs and cytidine-rich RNA fragments that occupy TLR7 ligand-binding pockets and trigger a signaling-competent state. Can exert polynucleotide phosphatase activity toward 5'-phosphorylated ssDNA substrates although at a slow rate. Transphosphatidylase that catalyzes the exchange with R to S stereo-inversion of the glycerol moiety between (S,R)-lysophosphatidylglycerol (LPG) and monoacylglycerol (MAG) substrates to yield (S,S)-bis(monoacylglycero)phosphate (BMP). Can synthesize a variety of (S,S)-BMPs representing the main phospholipid constituent of lysosomal intralumenal vesicle (ILV) membranes that bind acid hydrolases for lipid degradation. Regulates the homeostasis and interorganellar communication of the endolysosomal system with an overall impact on cellular removal of dysfunctional organelles via autophagy as well as proper protein and lipid turnover. May play a role in myotube formation in response to ER stress. The protein is 5'-3' exonuclease PLD4 of Homo sapiens (Human).